The chain runs to 338 residues: Holliday junction branch migration complex subunit RuvB (338 aa).

Positions 4 to 187 (ADKDRLVSGD…FGISEHMAYY (184 aa)) are large ATPase domain (RuvB-L). Residues Leu26, Arg27, Gly68, Lys71, Thr72, Thr73, 134–136 (EDF), Arg177, Tyr187, and Arg224 contribute to the ATP site. Mg(2+) is bound at residue Thr72. Residues 188–258 (SADDLSEIVK…MVDHALDQLQ (71 aa)) are small ATPAse domain (RuvB-S). Positions 261–338 (QQGLDQIDRK…AHMGMSAEQH (78 aa)) are head domain (RuvB-H). DNA-binding residues include Arg316 and Arg321.

This sequence belongs to the RuvB family. In terms of assembly, homohexamer. Forms an RuvA(8)-RuvB(12)-Holliday junction (HJ) complex. HJ DNA is sandwiched between 2 RuvA tetramers; dsDNA enters through RuvA and exits via RuvB. An RuvB hexamer assembles on each DNA strand where it exits the tetramer. Each RuvB hexamer is contacted by two RuvA subunits (via domain III) on 2 adjacent RuvB subunits; this complex drives branch migration. In the full resolvosome a probable DNA-RuvA(4)-RuvB(12)-RuvC(2) complex forms which resolves the HJ.

It localises to the cytoplasm. It catalyses the reaction ATP + H2O = ADP + phosphate + H(+). Its function is as follows. The RuvA-RuvB-RuvC complex processes Holliday junction (HJ) DNA during genetic recombination and DNA repair, while the RuvA-RuvB complex plays an important role in the rescue of blocked DNA replication forks via replication fork reversal (RFR). RuvA specifically binds to HJ cruciform DNA, conferring on it an open structure. The RuvB hexamer acts as an ATP-dependent pump, pulling dsDNA into and through the RuvAB complex. RuvB forms 2 homohexamers on either side of HJ DNA bound by 1 or 2 RuvA tetramers; 4 subunits per hexamer contact DNA at a time. Coordinated motions by a converter formed by DNA-disengaged RuvB subunits stimulates ATP hydrolysis and nucleotide exchange. Immobilization of the converter enables RuvB to convert the ATP-contained energy into a lever motion, pulling 2 nucleotides of DNA out of the RuvA tetramer per ATP hydrolyzed, thus driving DNA branch migration. The RuvB motors rotate together with the DNA substrate, which together with the progressing nucleotide cycle form the mechanistic basis for DNA recombination by continuous HJ branch migration. Branch migration allows RuvC to scan DNA until it finds its consensus sequence, where it cleaves and resolves cruciform DNA. The sequence is that of Holliday junction branch migration complex subunit RuvB from Lacticaseibacillus paracasei (strain ATCC 334 / BCRC 17002 / CCUG 31169 / CIP 107868 / KCTC 3260 / NRRL B-441) (Lactobacillus paracasei).